The chain runs to 773 residues: Cellobiose dehydrogenase (773 aa).

Residues Met1 to Ser18 form the signal peptide. Gln19 carries the post-translational modification Pyrrolidone carboxylic acid. The heme domain stretch occupies residues Gln19–Gly208. Heme contacts are provided by Met83 and His181. The tract at residues Leu203 to Gly227 is disordered. Over residues Pro210–Gly227 the composition is skewed to low complexity. Positions Tyr235–Pro773 are oxidoreductase. Asp236–Arg265 provides a ligand contact to FAD. His707 functions as the Proton acceptor in the catalytic mechanism.

The protein in the C-terminal section; belongs to the GMC oxidoreductase family. The cofactor is FAD. Requires heme as cofactor.

It is found in the secreted. It carries out the reaction D-cellobiose + A = D-cellobiono-1,5-lactone + AH2. In terms of biological role, degrades both lignin and cellulose. Oxidizes cellobiose to cellobionolactone. The sequence is that of Cellobiose dehydrogenase (CDH-1) from Phanerodontia chrysosporium (White-rot fungus).